The sequence spans 412 residues: Light-independent protochlorophyllide reductase subunit N (412 aa).

Residues C16, C41, and C102 each contribute to the [4Fe-4S] cluster site.

It belongs to the BchN/ChlN family. In terms of assembly, protochlorophyllide reductase is composed of three subunits; ChlL, ChlN and ChlB. Forms a heterotetramer of two ChlB and two ChlN subunits. Requires [4Fe-4S] cluster as cofactor.

It catalyses the reaction chlorophyllide a + oxidized 2[4Fe-4S]-[ferredoxin] + 2 ADP + 2 phosphate = protochlorophyllide a + reduced 2[4Fe-4S]-[ferredoxin] + 2 ATP + 2 H2O. Its pathway is porphyrin-containing compound metabolism; chlorophyll biosynthesis (light-independent). In terms of biological role, component of the dark-operative protochlorophyllide reductase (DPOR) that uses Mg-ATP and reduced ferredoxin to reduce ring D of protochlorophyllide (Pchlide) to form chlorophyllide a (Chlide). This reaction is light-independent. The NB-protein (ChlN-ChlB) is the catalytic component of the complex. This Synechococcus sp. (strain RCC307) protein is Light-independent protochlorophyllide reductase subunit N.